The sequence spans 707 residues: Polyribonucleotide nucleotidyltransferase (707 aa).

Aspartate 485 and aspartate 491 together coordinate Mg(2+). Positions 552–611 constitute a KH domain; it reads PRIYTMKIDPKKIKDVIGKGGATIRTLTEETGTSIDIDDDGTVKIAAIDGNAVKEVMARI. Residues 621-689 enclose the S1 motif domain; that stretch reads GAVYTGKVTR…RQGRIRLTMK (69 aa).

The protein belongs to the polyribonucleotide nucleotidyltransferase family. In terms of assembly, component of the RNA degradosome, which is a multiprotein complex involved in RNA processing and mRNA degradation. Mg(2+) is required as a cofactor.

The protein localises to the cytoplasm. The enzyme catalyses RNA(n+1) + phosphate = RNA(n) + a ribonucleoside 5'-diphosphate. In terms of biological role, involved in mRNA degradation. Catalyzes the phosphorolysis of single-stranded polyribonucleotides processively in the 3'- to 5'-direction. This Actinobacillus succinogenes (strain ATCC 55618 / DSM 22257 / CCUG 43843 / 130Z) protein is Polyribonucleotide nucleotidyltransferase.